The following is a 199-amino-acid chain: Prefoldin subunit 3 (199 aa).

Residue M1 is modified to N-acetylmethionine.

It belongs to the prefoldin subunit alpha family. As to quaternary structure, heterohexamer of two PFD-alpha type and four PFD-beta type subunits.

Binds specifically to cytosolic chaperonin (c-CPN) and transfers target proteins to it. Binds to nascent polypeptide chain and promotes folding in an environment in which there are many competing pathways for nonnative proteins. The protein is Prefoldin subunit 3 (PAC10) of Saccharomyces cerevisiae (strain ATCC 204508 / S288c) (Baker's yeast).